We begin with the raw amino-acid sequence, 446 residues long: Bifunctional protein GlmU (446 aa).

Positions 1 to 226 (MLAIAILAAG…PFEIKGINDR (226 aa)) are pyrophosphorylase. Residues 7 to 10 (LAAG), lysine 21, glutamine 73, and 78 to 79 (GT) each bind UDP-N-acetyl-alpha-D-glucosamine. Aspartate 103 contacts Mg(2+). Positions 140, 155, 170, and 224 each coordinate UDP-N-acetyl-alpha-D-glucosamine. Asparagine 224 lines the Mg(2+) pocket. The interval 227–247 (VQLSECEHYIQEELKSLWMSK) is linker. Residues 248–446 (GVSFVDPISC…SKAIIRTKAD (199 aa)) are N-acetyltransferase. 2 residues coordinate UDP-N-acetyl-alpha-D-glucosamine: arginine 329 and lysine 347. Histidine 359 acts as the Proton acceptor in catalysis. Tyrosine 362 and asparagine 373 together coordinate UDP-N-acetyl-alpha-D-glucosamine. Acetyl-CoA is bound by residues alanine 376, alanine 419, and arginine 436.

This sequence in the N-terminal section; belongs to the N-acetylglucosamine-1-phosphate uridyltransferase family. It in the C-terminal section; belongs to the transferase hexapeptide repeat family. In terms of assembly, homotrimer. Requires Mg(2+) as cofactor.

The protein localises to the cytoplasm. It carries out the reaction alpha-D-glucosamine 1-phosphate + acetyl-CoA = N-acetyl-alpha-D-glucosamine 1-phosphate + CoA + H(+). The catalysed reaction is N-acetyl-alpha-D-glucosamine 1-phosphate + UTP + H(+) = UDP-N-acetyl-alpha-D-glucosamine + diphosphate. It participates in nucleotide-sugar biosynthesis; UDP-N-acetyl-alpha-D-glucosamine biosynthesis; N-acetyl-alpha-D-glucosamine 1-phosphate from alpha-D-glucosamine 6-phosphate (route II): step 2/2. The protein operates within nucleotide-sugar biosynthesis; UDP-N-acetyl-alpha-D-glucosamine biosynthesis; UDP-N-acetyl-alpha-D-glucosamine from N-acetyl-alpha-D-glucosamine 1-phosphate: step 1/1. It functions in the pathway bacterial outer membrane biogenesis; LPS lipid A biosynthesis. In terms of biological role, catalyzes the last two sequential reactions in the de novo biosynthetic pathway for UDP-N-acetylglucosamine (UDP-GlcNAc). The C-terminal domain catalyzes the transfer of acetyl group from acetyl coenzyme A to glucosamine-1-phosphate (GlcN-1-P) to produce N-acetylglucosamine-1-phosphate (GlcNAc-1-P), which is converted into UDP-GlcNAc by the transfer of uridine 5-monophosphate (from uridine 5-triphosphate), a reaction catalyzed by the N-terminal domain. This is Bifunctional protein GlmU from Prochlorococcus marinus (strain NATL2A).